The sequence spans 195 residues: dTDP-4-dehydrorhamnose 3,5-epimerase (195 aa).

Substrate-binding positions include Arg31, Glu36, 54–56 (QDN), and Arg67. His70 acts as the Proton acceptor in catalysis. Substrate-binding residues include Lys80 and His127. The active-site Proton donor is the Tyr140. Substrate contacts are provided by Asp151 and Lys176.

This sequence belongs to the dTDP-4-dehydrorhamnose 3,5-epimerase family. Homodimer.

The enzyme catalyses dTDP-4-dehydro-6-deoxy-alpha-D-glucose = dTDP-4-dehydro-beta-L-rhamnose. It participates in carbohydrate biosynthesis; dTDP-L-rhamnose biosynthesis. In terms of biological role, catalyzes the epimerization of the C3' and C5'positions of dTDP-6-deoxy-D-xylo-4-hexulose, forming dTDP-6-deoxy-L-lyxo-4-hexulose. The sequence is that of dTDP-4-dehydrorhamnose 3,5-epimerase from Sinorhizobium fredii (strain NBRC 101917 / NGR234).